An 886-amino-acid polypeptide reads, in one-letter code: MNIQEFKQKYNYDVATKMMQQYLDIKFAHLDCLLLFRMGDFYEMFYDDAILASNVLGIALTKRGKNGEEEIAMCGVPYHALEHYLTKLIEANYKVAICDQLETPEDAKNRGGYKAVVTRDVTRIITPGTIIEENLIASAEPNYLASLVIPQNKETASICYVDLSTSEIFVVNVPEAEILNELARLKPREILVSENLRSSNLADSIFKQLNFRITYQVDSCFAINKCKKIILDFYKMKDIKGIGEISSSQICVIGSILEYLSLTQKQNIPHLPIPRIINFHSYMTIDFSTRHNLAIVINSQGSSNGSLLNTINHTVTKQGGRLLYNFLSSPLTNIAKINHRLNITEFFYSNLEIVQRIRELLKKTSDIERCLTRITMNRSSGCDLLSIKYTLEAATIIKGVFFDAYGFNLPDFIEKIIKPLAGDAELYHLIDESIRADVPNNLNDGGIIKHEYHPKVAQLHDLINNRKLHIEKLKDQYRKETGIDSLKISHNNVIGLFIDITAKNVNKILDPKFIHRQTTVNNVRYTTTELQKLESELVNAKTLVISLEKALYADICSQVIKKAAYLRMLASSLSVLDVFCNFAYIADEYDYVKPELTDDLSFDIVKGRHPVVEKVLQRESKSFVYNDCHLSELKRIWLITGPNMAGKSTFLRQNAIIAIIAQIGSFVPAKSAKIGVVDKIFSRIGAADDLIKGQSTFMAEMLETSAILAQSTKNSLIILDEVGRGTSTYDGVSIAWSVLEYIHDKLKCRCLFATHYHELTVMNNFLPALQNYTIAIEESGKDILFLHNIISGAADRSYGIHVAALAGLPASVINRAEQILLKFEKTSTGKGKNILSTESNNLRLFNLEHNQTTIRSKLEEQFRTIDPDQLSPKAALELIYELKKLA.

641–648 (GPNMAGKS) serves as a coordination point for ATP.

This sequence belongs to the DNA mismatch repair MutS family.

Its function is as follows. This protein is involved in the repair of mismatches in DNA. It is possible that it carries out the mismatch recognition step. This protein has a weak ATPase activity. The chain is DNA mismatch repair protein MutS from Rickettsia akari (strain Hartford).